Here is an 864-residue protein sequence, read N- to C-terminus: Leucine--tRNA ligase (864 aa).

The 'HIGH' region signature appears at 42 to 52 (PYPSGKLHMGH). Positions 624-628 (KMSKS) match the 'KMSKS' region motif. Residue lysine 627 coordinates ATP.

The protein belongs to the class-I aminoacyl-tRNA synthetase family.

It is found in the cytoplasm. The enzyme catalyses tRNA(Leu) + L-leucine + ATP = L-leucyl-tRNA(Leu) + AMP + diphosphate. The polypeptide is Leucine--tRNA ligase (Burkholderia lata (strain ATCC 17760 / DSM 23089 / LMG 22485 / NCIMB 9086 / R18194 / 383)).